The sequence spans 605 residues: UvrABC system protein C (605 aa).

Residues Q14–I92 enclose the GIY-YIG domain. A UVR domain is found at K202–I237.

It belongs to the UvrC family. In terms of assembly, interacts with UvrB in an incision complex.

Its subcellular location is the cytoplasm. In terms of biological role, the UvrABC repair system catalyzes the recognition and processing of DNA lesions. UvrC both incises the 5' and 3' sides of the lesion. The N-terminal half is responsible for the 3' incision and the C-terminal half is responsible for the 5' incision. This Wolbachia pipientis subsp. Culex pipiens (strain wPip) protein is UvrABC system protein C.